We begin with the raw amino-acid sequence, 148 residues long: Putative anti-anti-sigma factor Rv2638 (148 aa).

Positions 30–141 (LRATTDGSGA…PTVDTALGKG (112 aa)) constitute an STAS domain.

It belongs to the anti-sigma-factor antagonist family. As to quaternary structure, interacts with unphosphorylated OprA.

The protein is Putative anti-anti-sigma factor Rv2638 of Mycobacterium tuberculosis (strain ATCC 25618 / H37Rv).